The primary structure comprises 91 residues: Small membrane A-kinase anchor protein (91 aa).

Gly-2 is lipidated: N-myristoyl glycine.

This sequence belongs to the small membrane AKAP family. May be palmitoylated at Cys-3.

It is found in the cell membrane. Binds to type I regulatory subunits of protein kinase A and may anchor/target them to the plasma membrane. The chain is Small membrane A-kinase anchor protein from Xenopus laevis (African clawed frog).